The primary structure comprises 112 residues: 2Fe-2S ferredoxin (112 aa).

The 103-residue stretch at isoleucine 5 to threonine 107 folds into the 2Fe-2S ferredoxin-type domain. Positions 42, 48, 51, and 88 each coordinate [2Fe-2S] cluster.

Belongs to the adrenodoxin/putidaredoxin family. It depends on [2Fe-2S] cluster as a cofactor.

Ferredoxin are iron-sulfur proteins that transfer electrons in a wide variety of metabolic reactions. The protein is 2Fe-2S ferredoxin (fdxB) of Rickettsia montanensis.